Reading from the N-terminus, the 746-residue chain is Proline--tRNA ligase (746 aa).

The required for editing of incorrectly charged tRNA stretch occupies residues 1 to 223 (MNNNTNGEII…NSNNNNNNNN (223 aa)). Over residues 181 to 201 (TSKARVDKKEDVQEEMAKNEE) the composition is skewed to basic and acidic residues. The interval 181 to 226 (TSKARVDKKEDVQEEMAKNEELQNNNNNNKNNSNSNNNNNNNNNHI) is disordered. The span at 204–224 (NNNNNNKNNSNSNNNNNNNNN) shows a compositional bias: low complexity. Arg390 serves as a coordination point for L-proline. Residues 390 to 394 (RWEFK), 401 to 405 (RTREF), and 475 to 477 (QAA) each bind ATP. His480 lines the L-proline pocket. Position 512–514 (512–514 (TTR)) interacts with ATP.

It belongs to the class-II aminoacyl-tRNA synthetase family. ProS type 3 subfamily. Homodimer.

It is found in the cytoplasm. The enzyme catalyses tRNA(Pro) + L-proline + ATP = L-prolyl-tRNA(Pro) + AMP + diphosphate. Its activity is regulated as follows. Inhibited by the quinazolinone-based compound febrifugine from the Chinese plant Dichroa febrifuga which is used to treat malaria-associated fever. Also inhibited by febrifugine derivatives such as halofuginone. Its function is as follows. Catalyzes the attachment of proline to tRNA(Pro) in a two-step reaction: proline is first activated by ATP to form Pro-AMP and then transferred to the acceptor end of tRNA(Pro). Functions in trans to edit the amino acid moiety from incorrectly charged Ala-tRNA(Pro). Has no activity on correctly charged Pro-tRNA(Pro) or Ala-tRNA(Ala). The sequence is that of Proline--tRNA ligase from Plasmodium falciparum (isolate 3D7).